A 75-amino-acid chain; its full sequence is MKPNISLINAVFRIACGLTIMSAASAKFTKKPWCRMHLFYIFMGAMKAGSGILRFCPVTYMFQHSDSGNNEHQNG.

2 helical membrane passes run 7 to 26 (LINAVFRIACGLTIMSAASA) and 36 to 58 (MHLFYIFMGAMKAGSGILRFCPV).

It localises to the cell membrane. This is an uncharacterized protein from Bacillus subtilis (strain 168).